A 457-amino-acid chain; its full sequence is UDP-glycosyltransferase 708C1 (457 aa).

Gly-31 is a UDP-alpha-D-glucose binding site. His-32 functions as the Proton acceptor in the catalytic mechanism. Position 32 (His-32) interacts with an anthocyanidin. Residue Thr-34 coordinates UDP-alpha-D-glucose. Asn-94 is a binding site for an anthocyanidin. Residue Asp-129 is the Charge relay of the active site. Thr-150 contributes to the UDP-alpha-D-glucose binding site. Residues 279–280 form a UDP region; that stretch reads NR. Val-341, Gln-343, His-358, Trp-361, Asn-362, Ser-363, and Glu-366 together coordinate UDP-alpha-D-glucose. Gly-381 lines the an anthocyanidin pocket. Positions 382 and 383 each coordinate UDP-alpha-D-glucose.

Belongs to the UDP-glycosyltransferase family. Expressed in cotyledons. Not detected in flowers, leaves, roots and hypocotyls.

The enzyme catalyses a 3'-hydro-2'-hydroxy-beta-oxodihydrochalcone + UDP-alpha-D-glucose = a 3'-(beta-D-glucopyranosyl)-2'-hydroxy-beta-oxodihydrochalcone + UDP + H(+). Functionally, UDP-glucose-dependent glucosyltransferase catalyzing the C-glucosylation of 2-hydroxyflavanones (2-hydroxynaringenin, 2-hydroxyeriodictyol and 2-hydroxypinocembrin) and phloretin. No activity with flavanones, flavones or flavonols. Exhibits C-glycosylation activity toward 2',4',6'-trihydroxyacetophenone and phloretin using UDP-glucose as sugar donor. Can use UDP-galactose as sugar donor, but catalytic efficiency is 14-fold lower toward UDP-galactose than toward UDP-glucose. The polypeptide is UDP-glycosyltransferase 708C1 (Fagopyrum esculentum (Common buckwheat)).